A 696-amino-acid polypeptide reads, in one-letter code: DNA ligase (696 aa).

Residues 36-40 (DAEYD), 85-86 (SL), and Glu-123 each bind NAD(+). Residue Lys-125 is the N6-AMP-lysine intermediate of the active site. The NAD(+) site is built by Arg-146, Glu-181, Lys-319, and Lys-343. Zn(2+)-binding residues include Cys-437, Cys-440, Cys-455, and Cys-461. The BRCT domain occupies 618-696 (PEGTSLAGKT…EDGLKALLGL (79 aa)).

Belongs to the NAD-dependent DNA ligase family. LigA subfamily. Mg(2+) is required as a cofactor. The cofactor is Mn(2+).

The catalysed reaction is NAD(+) + (deoxyribonucleotide)n-3'-hydroxyl + 5'-phospho-(deoxyribonucleotide)m = (deoxyribonucleotide)n+m + AMP + beta-nicotinamide D-nucleotide.. DNA ligase that catalyzes the formation of phosphodiester linkages between 5'-phosphoryl and 3'-hydroxyl groups in double-stranded DNA using NAD as a coenzyme and as the energy source for the reaction. It is essential for DNA replication and repair of damaged DNA. The polypeptide is DNA ligase (Bordetella bronchiseptica (strain ATCC BAA-588 / NCTC 13252 / RB50) (Alcaligenes bronchisepticus)).